The primary structure comprises 305 residues: Porphobilinogen deaminase (305 aa).

At Cys-240 the chain carries S-(dipyrrolylmethanemethyl)cysteine.

It belongs to the HMBS family. As to quaternary structure, monomer. Dipyrromethane is required as a cofactor.

The catalysed reaction is 4 porphobilinogen + H2O = hydroxymethylbilane + 4 NH4(+). It participates in porphyrin-containing compound metabolism; protoporphyrin-IX biosynthesis; coproporphyrinogen-III from 5-aminolevulinate: step 2/4. In terms of biological role, tetrapolymerization of the monopyrrole PBG into the hydroxymethylbilane pre-uroporphyrinogen in several discrete steps. In Xylella fastidiosa (strain 9a5c), this protein is Porphobilinogen deaminase (hemC).